Here is an 87-residue protein sequence, read N- to C-terminus: Phytosulfokines 2 (87 aa).

The N-terminal stretch at 1–22 is a signal peptide; the sequence is MANVSALLTIALLLCSTLMCTA. The propeptide occupies 23-77; it reads RPEPAISISITTAADPCNMEKKIEGKLDDMHMVDENCGADDEDCLMRRTLVAHTD. Sulfotyrosine occurs at positions 78 and 80. Residues 83–87 constitute a propeptide that is removed on maturation; it reads KKKHP.

The protein belongs to the phytosulfokine family. In terms of processing, sulfation is important for activity and for the binding to a putative membrane receptor. PSK-beta is an enzymatic derivative of PSK-alpha. In terms of tissue distribution, expressed in stems, roots and leaves.

It is found in the secreted. In terms of biological role, promotes plant cell differentiation, organogenesis and somatic embryogenesis as well as cell proliferation. This is Phytosulfokines 2 (PSK2) from Arabidopsis thaliana (Mouse-ear cress).